The sequence spans 230 residues: MGIPDDPAGSAPENFDLATMRVEYVEKDGCGDLDVDWLGDDPATGWLTLLQTWINDAWKAGLPDANAMVVGTVDADGRPVTRSVLCKSVDPDGITFYTNYDSAKGEHLAVNAYASATFPWYQLGRQVHVRGAVTKVSAEETAEYWSKRPRGSQLGAWASQQSRPIASRAALLEQLAEVTERFADLDEVPVPPNWGGYRIAPEVVEFWQGRENRVHNRIRVTGGRVERLQP.

Residues 21–24 (RVEY) and Lys-87 contribute to the substrate site. FMN contacts are provided by residues 82-87 (RSVLCK), 97-98 (YT), Lys-104, and Gln-126. The substrate site is built by Tyr-144, Arg-148, and Ser-152. FMN-binding positions include 161–162 (QS) and Trp-207. 213 to 215 (RVH) contributes to the substrate binding site. Arg-217 is an FMN binding site.

This sequence belongs to the pyridoxamine 5'-phosphate oxidase family. In terms of assembly, homodimer. Requires FMN as cofactor.

It carries out the reaction pyridoxamine 5'-phosphate + O2 + H2O = pyridoxal 5'-phosphate + H2O2 + NH4(+). It catalyses the reaction pyridoxine 5'-phosphate + O2 = pyridoxal 5'-phosphate + H2O2. It participates in cofactor metabolism; pyridoxal 5'-phosphate salvage; pyridoxal 5'-phosphate from pyridoxamine 5'-phosphate: step 1/1. Its pathway is cofactor metabolism; pyridoxal 5'-phosphate salvage; pyridoxal 5'-phosphate from pyridoxine 5'-phosphate: step 1/1. Catalyzes the oxidation of either pyridoxine 5'-phosphate (PNP) or pyridoxamine 5'-phosphate (PMP) into pyridoxal 5'-phosphate (PLP). The chain is Pyridoxine/pyridoxamine 5'-phosphate oxidase from Mycolicibacterium smegmatis (strain ATCC 700084 / mc(2)155) (Mycobacterium smegmatis).